Consider the following 293-residue polypeptide: Acetyl-coenzyme A carboxylase carboxyl transferase subunit beta (293 aa).

Positions 29 to 293 (LWVKCPECGQ…GCKAKKAAGK (265 aa)) constitute a CoA carboxyltransferase N-terminal domain. Zn(2+)-binding residues include Cys33, Cys36, Cys52, and Cys55. The C4-type zinc finger occupies 33–55 (CPECGQVVYRKDLHANASVCSNC).

Belongs to the AccD/PCCB family. Acetyl-CoA carboxylase is a heterohexamer composed of biotin carboxyl carrier protein (AccB), biotin carboxylase (AccC) and two subunits each of ACCase subunit alpha (AccA) and ACCase subunit beta (AccD). Zn(2+) is required as a cofactor.

The protein localises to the cytoplasm. The catalysed reaction is N(6)-carboxybiotinyl-L-lysyl-[protein] + acetyl-CoA = N(6)-biotinyl-L-lysyl-[protein] + malonyl-CoA. It functions in the pathway lipid metabolism; malonyl-CoA biosynthesis; malonyl-CoA from acetyl-CoA: step 1/1. Functionally, component of the acetyl coenzyme A carboxylase (ACC) complex. Biotin carboxylase (BC) catalyzes the carboxylation of biotin on its carrier protein (BCCP) and then the CO(2) group is transferred by the transcarboxylase to acetyl-CoA to form malonyl-CoA. The chain is Acetyl-coenzyme A carboxylase carboxyl transferase subunit beta from Prochlorococcus marinus (strain MIT 9303).